Consider the following 426-residue polypeptide: UPF0329 protein ECU06_0040 (426 aa).

Over residues 136–172 (RQRKREEETERSVKELVGDEEKAKSKEEKAKSKEEKA) the composition is skewed to basic and acidic residues. The disordered stretch occupies residues 136–230 (RQRKREEETE…GGKKKSKGGR (95 aa)). Residues 220 to 230 (KGGKKKSKGGR) are compositionally biased toward basic residues.

Belongs to the UPF0329 family.

The polypeptide is UPF0329 protein ECU06_0040 (Encephalitozoon cuniculi (strain GB-M1) (Microsporidian parasite)).